A 436-amino-acid chain; its full sequence is Enolase (436 aa).

Gln-163 is a binding site for (2R)-2-phosphoglycerate. Glu-205 functions as the Proton donor in the catalytic mechanism. Residues Asp-242, Glu-285, and Asp-312 each contribute to the Mg(2+) site. 4 residues coordinate (2R)-2-phosphoglycerate: Lys-337, Arg-366, Ser-367, and Lys-388. Residue Lys-337 is the Proton acceptor of the active site.

This sequence belongs to the enolase family. Requires Mg(2+) as cofactor.

The protein resides in the cytoplasm. The protein localises to the secreted. It is found in the cell surface. It carries out the reaction (2R)-2-phosphoglycerate = phosphoenolpyruvate + H2O. It participates in carbohydrate degradation; glycolysis; pyruvate from D-glyceraldehyde 3-phosphate: step 4/5. Functionally, catalyzes the reversible conversion of 2-phosphoglycerate (2-PG) into phosphoenolpyruvate (PEP). It is essential for the degradation of carbohydrates via glycolysis. The sequence is that of Enolase from Solidesulfovibrio magneticus (strain ATCC 700980 / DSM 13731 / RS-1) (Desulfovibrio magneticus).